The following is a 147-amino-acid chain: uncharacterized protein (147 aa).

The HTH LytTR-type domain occupies 44 to 147 (LVGYIDKEIH…LKSIKERLSI (104 aa)).

Its subcellular location is the cytoplasm. This is an uncharacterized protein from Staphylococcus aureus (strain bovine RF122 / ET3-1).